The chain runs to 166 residues: Probable dual specificity protein phosphatase H1 homolog (166 aa).

One can recognise a Tyrosine-protein phosphatase domain in the interval 25–166 (DITKITDYVY…FLNQIIDKYI (142 aa)). Residue cysteine 108 is the Phosphocysteine intermediate of the active site.

This sequence belongs to the protein-tyrosine phosphatase family. Non-receptor class dual specificity subfamily. In terms of assembly, homodimer.

Its subcellular location is the virion. The protein localises to the host cytoplasm. The catalysed reaction is O-phospho-L-tyrosyl-[protein] + H2O = L-tyrosyl-[protein] + phosphate. It carries out the reaction O-phospho-L-seryl-[protein] + H2O = L-seryl-[protein] + phosphate. Serine/Tyrosine phosphatase which down-regulates cellular antiviral response by dephosphorylating activated STAT1 and blocking interferon (IFN)-stimulated innate immune responses. This Vertebrata (FPV) protein is Probable dual specificity protein phosphatase H1 homolog.